Consider the following 490-residue polypeptide: Betaine aldehyde dehydrogenase (490 aa).

Residues Thr-26, Ile-27, and Asp-93 each coordinate K(+). An NAD(+)-binding site is contributed by 150-152 (GAW). Lys-162 serves as the catalytic Charge relay system. Residue 176 to 179 (KPSE) participates in NAD(+) binding. K(+) is bound at residue Val-180. 230-233 (GVAS) is a binding site for NAD(+). Leu-246 lines the K(+) pocket. Glu-252 serves as the catalytic Proton acceptor. 3 residues coordinate NAD(+): Gly-254, Cys-286, and Glu-387. The active-site Nucleophile is the Cys-286. Cys-286 bears the Cysteine sulfenic acid (-SOH) mark. Positions 457 and 460 each coordinate K(+). Glu-464 (charge relay system) is an active-site residue.

Belongs to the aldehyde dehydrogenase family. Dimer of dimers. It depends on K(+) as a cofactor.

It carries out the reaction betaine aldehyde + NAD(+) + H2O = glycine betaine + NADH + 2 H(+). Its pathway is amine and polyamine biosynthesis; betaine biosynthesis via choline pathway; betaine from betaine aldehyde: step 1/1. In terms of biological role, involved in the biosynthesis of the osmoprotectant glycine betaine. Catalyzes the irreversible oxidation of betaine aldehyde to the corresponding acid. The chain is Betaine aldehyde dehydrogenase from Escherichia coli (strain SMS-3-5 / SECEC).